The primary structure comprises 150 residues: UPF0208 membrane protein VP2081 (150 aa).

Helical transmembrane passes span 42–62 (FGIK…MAFN) and 70–90 (SIVV…WLGA).

The protein belongs to the UPF0208 family.

The protein localises to the cell inner membrane. This is UPF0208 membrane protein VP2081 from Vibrio parahaemolyticus serotype O3:K6 (strain RIMD 2210633).